The primary structure comprises 276 residues: Dermonecrotic toxin LlSicTox-alphaIV1ii (276 aa).

His5 is a catalytic residue. Residues Glu25 and Asp27 each coordinate Mg(2+). The Nucleophile role is filled by His41. 2 disulfides stabilise this stretch: Cys45/Cys51 and Cys47/Cys193. Residue Asp85 coordinates Mg(2+).

It belongs to the arthropod phospholipase D family. Class II subfamily. Mg(2+) serves as cofactor. As to expression, expressed by the venom gland.

Its subcellular location is the secreted. The enzyme catalyses an N-(acyl)-sphingosylphosphocholine = an N-(acyl)-sphingosyl-1,3-cyclic phosphate + choline. It catalyses the reaction an N-(acyl)-sphingosylphosphoethanolamine = an N-(acyl)-sphingosyl-1,3-cyclic phosphate + ethanolamine. The catalysed reaction is a 1-acyl-sn-glycero-3-phosphocholine = a 1-acyl-sn-glycero-2,3-cyclic phosphate + choline. It carries out the reaction a 1-acyl-sn-glycero-3-phosphoethanolamine = a 1-acyl-sn-glycero-2,3-cyclic phosphate + ethanolamine. Its function is as follows. Dermonecrotic toxins cleave the phosphodiester linkage between the phosphate and headgroup of certain phospholipids (sphingolipid and lysolipid substrates), forming an alcohol (often choline) and a cyclic phosphate. This toxin acts on sphingomyelin (SM). It may also act on ceramide phosphoethanolamine (CPE), lysophosphatidylcholine (LPC) and lysophosphatidylethanolamine (LPE), but not on lysophosphatidylserine (LPS), and lysophosphatidylglycerol (LPG). It acts by transphosphatidylation, releasing exclusively cyclic phosphate products as second products. Induces dermonecrosis, hemolysis, increased vascular permeability, edema, inflammatory response, and platelet aggregation. This Loxosceles laeta (South American recluse spider) protein is Dermonecrotic toxin LlSicTox-alphaIV1ii.